A 104-amino-acid polypeptide reads, in one-letter code: Cytochrome c oxidase assembly factor 6 (104 aa).

The disordered stretch occupies residues 1-22 (MGLFSFDGGKKESQPPNTRSQR). A CHCH domain is found at 22-76 (RKLCWESRDAFFQCLDKADILDAMDPKNSKSIKSHCKVENEKFEENCAHSWIKYF). The short motif at 25–35 (CWESRDAFFQC) is the Cx9C motif element. 2 cysteine pairs are disulfide-bonded: cysteine 25-cysteine 68 and cysteine 35-cysteine 57. Positions 57-68 (CKVENEKFEENC) match the Cx10C motif motif.

Belongs to the cytochrome c oxidase subunit 6B family. As to quaternary structure, interacts with COX2.

The protein localises to the cytoplasm. Its subcellular location is the nucleus. It is found in the mitochondrion intermembrane space. Involved in the maturation of the mitochondrial respiratory chain complex IV subunit MT-CO2/COX2. Thereby, may regulate early steps of complex IV assembly. Mitochondrial respiratory chain complex IV or cytochrome c oxidase is the component of the respiratory chain that catalyzes the transfer of electrons from intermembrane space cytochrome c to molecular oxygen in the matrix and as a consequence contributes to the proton gradient involved in mitochondrial ATP synthesis. May also be required for efficient formation of respiratory supercomplexes comprised of complexes III and IV. The sequence is that of Cytochrome c oxidase assembly factor 6 from Saccharomyces cerevisiae (strain ATCC 204508 / S288c) (Baker's yeast).